Consider the following 268-residue polypeptide: MSRLQTRFAQLKQENRAALVTFVTAGDPDYASSLEILKGLPAAGADVIELGMPFTDPMADGPAIQLANIRALDGGQTLARTLQMVREFRSGDSETPLVLMGYFNPIHHYGVERFIAEAKEVGVDGLIVVDLPPEHNEDLCHPAQAAGIDFIRLTTPTTGDQRLPTVLEGSSGFVYYVSVAGVTGANAATLEHVEEAVARLRRHTDLPIGIGFGIRSAEHAAAVARLADGVVVGSALIDRIAKARDNAQAVKDVLALCGELAEGVRNAR.

Residues glutamate 49 and aspartate 60 each act as proton acceptor in the active site.

This sequence belongs to the TrpA family. As to quaternary structure, tetramer of two alpha and two beta chains.

The enzyme catalyses (1S,2R)-1-C-(indol-3-yl)glycerol 3-phosphate + L-serine = D-glyceraldehyde 3-phosphate + L-tryptophan + H2O. Its pathway is amino-acid biosynthesis; L-tryptophan biosynthesis; L-tryptophan from chorismate: step 5/5. Functionally, the alpha subunit is responsible for the aldol cleavage of indoleglycerol phosphate to indole and glyceraldehyde 3-phosphate. The sequence is that of Tryptophan synthase alpha chain from Pseudomonas aeruginosa (strain ATCC 15692 / DSM 22644 / CIP 104116 / JCM 14847 / LMG 12228 / 1C / PRS 101 / PAO1).